The following is a 469-amino-acid chain: CBL-interacting serine/threonine-protein kinase 16 (469 aa).

A Protein kinase domain is found at 15 to 278 (YNIGRLLGTG…MSEIKMIPWF (264 aa)). Residues 21 to 29 (LGTGNFAKV) and Lys44 each bind ATP. The active-site Proton acceptor is Asp139. The interval 157-193 (DFGLSALMMPEGLGGRRGSSDDLLHTRCGTPAYVAPE) is activation loop. Phosphoserine is present on Ser161. A Phosphothreonine modification is found at Thr182. The tract at residues 290 to 320 (IDETIPSPPEPPTKKKKKDLNEKEDDGASPR) is disordered. Residues 317–342 (ASPRSFNAFQFITSMSSGFDLSNLFE) enclose the NAF domain. Positions 346–376 (KPKRMFTSKFPAKSVKERLETAAREMDMRVK) are PPI. The interval 447–469 (DDEDDVTTNDNVDTNDNKINNVS) is disordered. Over residues 454–469 (TNDNVDTNDNKINNVS) the composition is skewed to low complexity.

It belongs to the protein kinase superfamily. CAMK Ser/Thr protein kinase family. SNF1 subfamily. In terms of assembly, part of a K(+)-channel calcium-sensing kinase/phosphatase complex composed by a calcium sensor CBL (CBL1, CBL2, CBL3 or CBL9), a kinase CIPK (CIPK6, CIPK16 or CIPK23), a phosphatase PP2C (AIP1) and a K(+)-channel (AKT1). Interacts with AKT1, CBL1, CBL2, CBL3 and CBL9. Requires Mn(2+) as cofactor.

The enzyme catalyses L-seryl-[protein] + ATP = O-phospho-L-seryl-[protein] + ADP + H(+). It catalyses the reaction L-threonyl-[protein] + ATP = O-phospho-L-threonyl-[protein] + ADP + H(+). Its function is as follows. CIPK serine-threonine protein kinases interact with CBL proteins. Binding of a CBL protein to the regulatory NAF domain of CIPK protein lead to the activation of the kinase in a calcium-dependent manner. Downstream of CBL1, CBL2, CBL3 and CBL9, regulates by phosphorylation the K(+) conductance and uptake of AKT1. This chain is CBL-interacting serine/threonine-protein kinase 16 (CIPK16), found in Arabidopsis thaliana (Mouse-ear cress).